The primary structure comprises 94 residues: Small ribosomal subunit protein uS19 (94 aa).

Belongs to the universal ribosomal protein uS19 family.

Its function is as follows. Protein S19 forms a complex with S13 that binds strongly to the 16S ribosomal RNA. The protein is Small ribosomal subunit protein uS19 of Endomicrobium trichonymphae.